An 82-amino-acid polypeptide reads, in one-letter code: U1-plectoxin-Pt1a (82 aa).

The first 20 residues, 1-20, serve as a signal peptide directing secretion; sequence MKHLIFSSALVCALVVCTFA. A propeptide spanning residues 21-33 is cleaved from the precursor; sequence EEQVNVPFLPDER. Cystine bridges form between cysteine 37–cysteine 51, cysteine 44–cysteine 57, cysteine 50–cysteine 68, cysteine 54–cysteine 77, and cysteine 59–cysteine 66. The O-palmitoyl serine moiety is linked to residue serine 79. A propeptide spanning residues 80–82 is cleaved from the precursor; sequence RRR.

It belongs to the neurotoxin 02 (plectoxin) family. 02 (plectoxin) subfamily. Post-translationally, plectoxin-5 presumably undergoes post-translational modification to give rise to plectoxin-6. In terms of tissue distribution, expressed by the venom gland.

The protein resides in the secreted. Its function is as follows. Potent toxin that may paralyze and/or kill insect pests such as H.virescens (lepidoptera), S.exigua (beet armyworm) and M.sexta (tobacco hornworm). This is U1-plectoxin-Pt1a from Plectreurys tristis (Spider).